We begin with the raw amino-acid sequence, 193 residues long: Coiled-coil domain-containing protein 184 (193 aa).

The stretch at 39-68 (GMKELMEHLKAQLQALFEDVRAMRGALDEQ) forms a coiled coil. Positions 101-176 (GLGVAGGKGS…LGENGPLVEP (76 aa)) are disordered. The segment covering 135–146 (PDEEDEEEEEEK) has biased composition (acidic residues).

The sequence is that of Coiled-coil domain-containing protein 184 (Ccdc184) from Rattus norvegicus (Rat).